The chain runs to 314 residues: Putative peptide transport system permease protein BruAb2_1031 (314 aa).

A run of 6 helical transmembrane segments spans residues 12-32, 101-121, 135-155, 177-197, 237-257, and 286-306; these read AIPV…LLPG, LALL…VVAA, LALL…VILF, WLRS…GYLA, VSVL…SVVI, and MLFL…LYTI. Residues 95 to 304 form the ABC transmembrane type-1 domain; that stretch reads LPVTISLALL…AINVLVDILY (210 aa).

Belongs to the binding-protein-dependent transport system permease family. As to quaternary structure, the complex is composed of two ATP-binding proteins (BruAb2_1033 and BruAb2_1034), two transmembrane proteins (BruAb2_1031 and BruAb2_1032) and a solute-binding protein (BruAb2_1030).

The protein localises to the cell inner membrane. Functionally, probably part of an ABC transporter complex that could be involved in peptide import. Probably responsible for the translocation of the substrate across the membrane. The polypeptide is Putative peptide transport system permease protein BruAb2_1031 (Brucella abortus biovar 1 (strain 9-941)).